Here is a 215-residue protein sequence, read N- to C-terminus: 3-dehydroquinate dehydratase (215 aa).

Residues Ser-6, 31 to 33 (ELR), and Arg-64 each bind 3-dehydroquinate. The Proton donor/acceptor role is filled by His-111. The active-site Schiff-base intermediate with substrate is Lys-138. Residues Arg-174, Thr-193, and Gln-197 each contribute to the 3-dehydroquinate site.

The protein belongs to the type-I 3-dehydroquinase family. As to quaternary structure, homodimer.

It catalyses the reaction 3-dehydroquinate = 3-dehydroshikimate + H2O. Its pathway is metabolic intermediate biosynthesis; chorismate biosynthesis; chorismate from D-erythrose 4-phosphate and phosphoenolpyruvate: step 3/7. Functionally, involved in the third step of the chorismate pathway, which leads to the biosynthesis of aromatic amino acids. Catalyzes the cis-dehydration of 3-dehydroquinate (DHQ) and introduces the first double bond of the aromatic ring to yield 3-dehydroshikimate. The polypeptide is 3-dehydroquinate dehydratase (Ignicoccus hospitalis (strain KIN4/I / DSM 18386 / JCM 14125)).